Here is a 61-residue protein sequence, read N- to C-terminus: Large ribosomal subunit protein uL30 (61 aa).

Belongs to the universal ribosomal protein uL30 family. In terms of assembly, part of the 50S ribosomal subunit.

The protein is Large ribosomal subunit protein uL30 of Fervidobacterium nodosum (strain ATCC 35602 / DSM 5306 / Rt17-B1).